The primary structure comprises 341 residues: UDP-3-O-acylglucosamine N-acyltransferase (341 aa).

The active-site Proton acceptor is His239.

The protein belongs to the transferase hexapeptide repeat family. LpxD subfamily. Homotrimer.

It catalyses the reaction a UDP-3-O-[(3R)-3-hydroxyacyl]-alpha-D-glucosamine + a (3R)-hydroxyacyl-[ACP] = a UDP-2-N,3-O-bis[(3R)-3-hydroxyacyl]-alpha-D-glucosamine + holo-[ACP] + H(+). The protein operates within bacterial outer membrane biogenesis; LPS lipid A biosynthesis. In terms of biological role, catalyzes the N-acylation of UDP-3-O-acylglucosamine using 3-hydroxyacyl-ACP as the acyl donor. Is involved in the biosynthesis of lipid A, a phosphorylated glycolipid that anchors the lipopolysaccharide to the outer membrane of the cell. This is UDP-3-O-acylglucosamine N-acyltransferase from Shewanella oneidensis (strain ATCC 700550 / JCM 31522 / CIP 106686 / LMG 19005 / NCIMB 14063 / MR-1).